We begin with the raw amino-acid sequence, 358 residues long: Neutral protease 2 homolog PABG_02362 (358 aa).

An N-terminal signal peptide occupies residues 1–19; sequence MRRVSGILAVAAFTISAFA. A propeptide spanning residues 20–182 is cleaved from the precursor; the sequence is GVIQPVAKDA…FAAMNQFVKI (163 aa). Cystine bridges form between cysteine 188-cysteine 259 and cysteine 266-cysteine 284. Asparagine 249 carries N-linked (GlcNAc...) asparagine glycosylation. Position 309 (histidine 309) interacts with Zn(2+). Residue glutamate 310 is part of the active site. Histidine 313 and aspartate 324 together coordinate Zn(2+).

Belongs to the peptidase M35 family. Zn(2+) is required as a cofactor.

It is found in the secreted. It catalyses the reaction Preferential cleavage of bonds with hydrophobic residues in P1'. Also 3-Asn-|-Gln-4 and 8-Gly-|-Ser-9 bonds in insulin B chain.. Functionally, secreted metalloproteinase that allows assimilation of proteinaceous substrates. Shows high activities on basic nuclear substrates such as histone and protamine. This is Neutral protease 2 homolog PABG_02362 from Paracoccidioides brasiliensis (strain Pb03).